We begin with the raw amino-acid sequence, 406 residues long: MAKGEFIRTKPHVNVGTIGHVDHGKTTLTAALTFVTAAENPNVEVKDYGDIDKAPEERARGITINTAHVEYETAKRHYSHVDCPGHADYIKNMITGAAQMDGAILVVSAADGPMPQTREHILLARQVGVPYIVVFMNKVDMVDDPELLDLVEMEVRDLLNQYEFPGDEVPVIRGSALLALEQMHRNPKTRRGENEWVDKIWELLDAIDEYIPTPVRDVDKPFLMPVEDVFTITGRGTVATGRIERGKVKVGDEVEIVGLAPETRKTVVTGVEMHRKTLQEGIAGDNVGVLLRGVSREEVERGQVLAKPGSITPHTKFEASVYVLKKEEGGRHTGFFSGYRPQFYFRTTDVTGVVQLPPGVEMVMPGDNVTFTVELIKPVALEEGLRFAIREGGRTVGAGVVTKILE.

The 206-residue stretch at 10–215 (KPHVNVGTIG…AIDEYIPTPV (206 aa)) folds into the tr-type G domain. The tract at residues 19-26 (GHVDHGKT) is G1. 19–26 (GHVDHGKT) lines the GTP pocket. T26 provides a ligand contact to Mg(2+). Residues 61–65 (GITIN) form a G2 region. Positions 82 to 85 (DCPG) are G3. Residues 82–86 (DCPGH) and 137–140 (NKVD) each bind GTP. Residues 137-140 (NKVD) form a G4 region. The tract at residues 175 to 177 (SAL) is G5. Position 395 is a phosphothreonine (T395).

This sequence belongs to the TRAFAC class translation factor GTPase superfamily. Classic translation factor GTPase family. EF-Tu/EF-1A subfamily. As to quaternary structure, monomer. Post-translationally, phosphorylated on a threonine.

Its subcellular location is the cytoplasm. It carries out the reaction GTP + H2O = GDP + phosphate + H(+). GTP hydrolase that promotes the GTP-dependent binding of aminoacyl-tRNA to the A-site of ribosomes during protein biosynthesis. In terms of biological role, protects glycyl-tRNA(Gly) from hydrolysis by E.coli D-aminoacyl-tRNA deacylase (dtd). The polypeptide is Elongation factor Tu-B (Thermus thermophilus (strain ATCC 27634 / DSM 579 / HB8)).